We begin with the raw amino-acid sequence, 394 residues long: Elongation factor Tu (394 aa).

A tr-type G domain is found at 10–204 (KPHVNIGTIG…AVDSYIPQPV (195 aa)). Positions 19 to 26 (GHVDHGKT) are G1. 19–26 (GHVDHGKT) lines the GTP pocket. Thr26 is a binding site for Mg(2+). Positions 60 to 64 (GITIS) are G2. Positions 81-84 (DCPG) are G3. GTP is bound by residues 81-85 (DCPGH) and 136-139 (NKVD). The segment at 136 to 139 (NKVD) is G4. A G5 region spans residues 174 to 176 (SAL).

Belongs to the TRAFAC class translation factor GTPase superfamily. Classic translation factor GTPase family. EF-Tu/EF-1A subfamily. As to quaternary structure, monomer.

Its subcellular location is the cytoplasm. The catalysed reaction is GTP + H2O = GDP + phosphate + H(+). Its function is as follows. GTP hydrolase that promotes the GTP-dependent binding of aminoacyl-tRNA to the A-site of ribosomes during protein biosynthesis. This Rickettsia montanensis protein is Elongation factor Tu.